The primary structure comprises 259 residues: Adenylate kinase (259 aa).

52-57 (GAGKGT) provides a ligand contact to ATP. The interval 72–101 (ATGDMLRSQVAKKTDLGREAKKIMDQGGLV) is NMP. Residues Thr73, Arg78, 99–101 (GLV), 128–131 (GFPR), and Gln135 each bind AMP. An LID region spans residues 169–206 (GRLVHPASGRSYHKIFNPPKEAMKDDITGEPLVQRSDD). ATP contacts are provided by residues Arg170 and 179 to 180 (SY). Arg203 and Arg214 together coordinate AMP. Gln242 provides a ligand contact to ATP.

Belongs to the adenylate kinase family. AK2 subfamily. In terms of assembly, monomer.

The protein resides in the cytoplasm. It is found in the mitochondrion intermembrane space. It catalyses the reaction AMP + ATP = 2 ADP. Catalyzes the reversible transfer of the terminal phosphate group between ATP and AMP. Plays an important role in cellular energy homeostasis and in adenine nucleotide metabolism. Adenylate kinase activity is critical for regulation of the phosphate utilization and the AMP de novo biosynthesis pathways. The polypeptide is Adenylate kinase (adk1) (Emericella nidulans (strain FGSC A4 / ATCC 38163 / CBS 112.46 / NRRL 194 / M139) (Aspergillus nidulans)).